We begin with the raw amino-acid sequence, 346 residues long: Small ribosomal subunit biogenesis GTPase RsgA (346 aa).

The interval methionine 1 to histidine 25 is disordered. The segment covering threonine 7–lysine 20 has biased composition (polar residues). The region spanning glutamate 103 to phenylalanine 271 is the CP-type G domain. GTP-binding positions include asparagine 159 to aspartate 162 and glycine 213 to serine 221. Zn(2+) contacts are provided by cysteine 295, cysteine 300, histidine 302, and cysteine 308.

This sequence belongs to the TRAFAC class YlqF/YawG GTPase family. RsgA subfamily. In terms of assembly, monomer. Associates with 30S ribosomal subunit, binds 16S rRNA. Zn(2+) serves as cofactor.

It localises to the cytoplasm. Functionally, one of several proteins that assist in the late maturation steps of the functional core of the 30S ribosomal subunit. Helps release RbfA from mature subunits. May play a role in the assembly of ribosomal proteins into the subunit. Circularly permuted GTPase that catalyzes slow GTP hydrolysis, GTPase activity is stimulated by the 30S ribosomal subunit. The sequence is that of Small ribosomal subunit biogenesis GTPase RsgA from Haemophilus influenzae (strain ATCC 51907 / DSM 11121 / KW20 / Rd).